Reading from the N-terminus, the 414-residue chain is MDSVIEDVRLRKIIDSRGNPTVEADVLTWNGFGRAAAPSGASTGINEVTSFPDGGVDQVITDVEDLISSEIIGMEAEDIREIDNVLKEIDGTDNFSTIGGNTAVAVSMATAKAAASSYNLPLYKFLGGIMPTQIPFPLGNMINGGAHAGTNAPDIQEFLVIPVGASNITEAITTNINVHRRIKAKIQEKDKTFTGGKGDEGGWAPNLTNEEALEIQFTSCEEVSDETGVLVKPGLDVASSEFWNEKEQKYVYEREGTSRTVEEQIDYIADLIDTYKFFYVEDPIQENDFEAFAELTSKSGKDCLICGDDLFVTNAEILAKGIEAHAGNSLIIKPNQIGTLTDTYNTIKLAKANKYVPVVSHRSGETTDETIAHLAVAFNAPIIKTGAAGGERIAKLNELVRIEEELLNPSMADL.

Residue glutamine 156 coordinates (2R)-2-phosphoglycerate. Glutamate 200 functions as the Proton donor in the catalytic mechanism. The Mg(2+) site is built by aspartate 236, glutamate 281, and aspartate 308. Lysine 333, arginine 362, serine 363, and lysine 384 together coordinate (2R)-2-phosphoglycerate. The active-site Proton acceptor is the lysine 333.

The protein belongs to the enolase family. Mg(2+) is required as a cofactor.

Its subcellular location is the cytoplasm. It localises to the secreted. It is found in the cell surface. It carries out the reaction (2R)-2-phosphoglycerate = phosphoenolpyruvate + H2O. It functions in the pathway carbohydrate degradation; glycolysis; pyruvate from D-glyceraldehyde 3-phosphate: step 4/5. Catalyzes the reversible conversion of 2-phosphoglycerate (2-PG) into phosphoenolpyruvate (PEP). It is essential for the degradation of carbohydrates via glycolysis. The polypeptide is Enolase (Methanosphaera stadtmanae (strain ATCC 43021 / DSM 3091 / JCM 11832 / MCB-3)).